The chain runs to 143 residues: Meiotically up-regulated gene 128 protein (143 aa).

Has a role in meiosis. The sequence is that of Meiotically up-regulated gene 128 protein (mug128) from Schizosaccharomyces pombe (strain 972 / ATCC 24843) (Fission yeast).